The following is a 359-amino-acid chain: Probable D-xylulose reductase A (359 aa).

Residues cysteine 47, histidine 72, and glutamate 73 each contribute to the Zn(2+) site. Position 182 to 187 (182 to 187 (GAGPVG)) interacts with NAD(+).

The protein belongs to the zinc-containing alcohol dehydrogenase family. Zn(2+) serves as cofactor.

It catalyses the reaction xylitol + NAD(+) = D-xylulose + NADH + H(+). It functions in the pathway carbohydrate degradation; L-arabinose degradation via L-arabinitol; D-xylulose 5-phosphate from L-arabinose (fungal route): step 4/5. Xylitol dehydrogenase which catalyzes the conversion of xylitol to D-xylulose. Xylose is a major component of hemicelluloses such as xylan. Most fungi utilize D-xylose via three enzymatic reactions, xylose reductase (XR), xylitol dehydrogenase (XDH), and xylulokinase, to form xylulose 5-phosphate, which enters pentose phosphate pathway. This is Probable D-xylulose reductase A (xdhA) from Emericella nidulans (strain FGSC A4 / ATCC 38163 / CBS 112.46 / NRRL 194 / M139) (Aspergillus nidulans).